Consider the following 121-residue polypeptide: Large ribosomal subunit protein eL8 (121 aa).

The protein belongs to the eukaryotic ribosomal protein eL8 family. As to quaternary structure, part of the 50S ribosomal subunit. Probably part of the RNase P complex.

It localises to the cytoplasm. Its function is as follows. Multifunctional RNA-binding protein that recognizes the K-turn motif in ribosomal RNA, the RNA component of RNase P, box H/ACA, box C/D and box C'/D' sRNAs. The sequence is that of Large ribosomal subunit protein eL8 from Thermoplasma volcanium (strain ATCC 51530 / DSM 4299 / JCM 9571 / NBRC 15438 / GSS1).